We begin with the raw amino-acid sequence, 456 residues long: Cysteine--tRNA ligase (456 aa).

Cys28 is a Zn(2+) binding site. The 'HIGH' region signature appears at 30–40; sequence ITVYDHCHLGH. Residues Cys209, His234, and Glu238 each coordinate Zn(2+). Positions 266-270 match the 'KMSKS' region motif; that stretch reads KMAKS. Lys269 contributes to the ATP binding site.

It belongs to the class-I aminoacyl-tRNA synthetase family. Monomer. Zn(2+) is required as a cofactor.

It localises to the cytoplasm. It carries out the reaction tRNA(Cys) + L-cysteine + ATP = L-cysteinyl-tRNA(Cys) + AMP + diphosphate. This Legionella pneumophila (strain Paris) protein is Cysteine--tRNA ligase.